The following is a 258-amino-acid chain: 14-3-3-like protein 16R (258 aa).

Residues 238-258 (DMQDDGTDEIKEAAPKPDNNE) are disordered. The span at 245-258 (DEIKEAAPKPDNNE) shows a compositional bias: basic and acidic residues.

It belongs to the 14-3-3 family.

This Solanum tuberosum (Potato) protein is 14-3-3-like protein 16R.